We begin with the raw amino-acid sequence, 344 residues long: UDP-N-acetylenolpyruvoylglucosamine reductase (344 aa).

The FAD-binding PCMH-type domain maps to 15–185; sequence LPACANQIIE…ISVGLKLAKA (171 aa). R161 is a catalytic residue. S231 acts as the Proton donor in catalysis. E327 is an active-site residue.

This sequence belongs to the MurB family. Requires FAD as cofactor.

It localises to the cytoplasm. It carries out the reaction UDP-N-acetyl-alpha-D-muramate + NADP(+) = UDP-N-acetyl-3-O-(1-carboxyvinyl)-alpha-D-glucosamine + NADPH + H(+). Its pathway is cell wall biogenesis; peptidoglycan biosynthesis. Its function is as follows. Cell wall formation. The polypeptide is UDP-N-acetylenolpyruvoylglucosamine reductase (Haemophilus ducreyi (strain 35000HP / ATCC 700724)).